The following is a 696-amino-acid chain: Glycine--tRNA ligase beta subunit (696 aa).

This sequence belongs to the class-II aminoacyl-tRNA synthetase family. In terms of assembly, tetramer of two alpha and two beta subunits.

The protein localises to the cytoplasm. It catalyses the reaction tRNA(Gly) + glycine + ATP = glycyl-tRNA(Gly) + AMP + diphosphate. This chain is Glycine--tRNA ligase beta subunit, found in Nitratidesulfovibrio vulgaris (strain DP4) (Desulfovibrio vulgaris).